Consider the following 122-residue polypeptide: Large ribosomal subunit protein uL14 (122 aa).

This sequence belongs to the universal ribosomal protein uL14 family. Part of the 50S ribosomal subunit. Forms a cluster with proteins L3 and L19. In the 70S ribosome, L14 and L19 interact and together make contacts with the 16S rRNA in bridges B5 and B8.

Functionally, binds to 23S rRNA. Forms part of two intersubunit bridges in the 70S ribosome. The protein is Large ribosomal subunit protein uL14 of Streptococcus gordonii (strain Challis / ATCC 35105 / BCRC 15272 / CH1 / DL1 / V288).